We begin with the raw amino-acid sequence, 97 residues long: Defensin-like protein 246 (97 aa).

The N-terminal stretch at 1 to 24 (MKFVAIFLVTCVLFSLFPSHLSQG) is a signal peptide. Disulfide bonds link C39/C96, C50/C79, C58/C89, and C77/C91.

Belongs to the DEFL family. As to expression, flower buds and stems.

The protein resides in the secreted. This is Defensin-like protein 246 (SCRL5) from Arabidopsis thaliana (Mouse-ear cress).